An 893-amino-acid polypeptide reads, in one-letter code: Eukaryotic translation initiation factor 3 subunit A (893 aa).

A PCI domain is found at 319–502 (LQRMAAHVLL…NSIFFGTDLT (184 aa)). Coiled coils occupy residues 576 to 707 (QKII…RAKR) and 784 to 881 (EIAL…REVA). Disordered stretches follow at residues 592–634 (AREL…EIQA) and 837–893 (AEAR…RRRQ). Residues 837 to 881 (AEARRLEREAEDEKRRQQYEKQRAKEEEAERKIQEDRDRLAREVA) show a composition bias toward basic and acidic residues.

This sequence belongs to the eIF-3 subunit A family. As to quaternary structure, component of the eukaryotic translation initiation factor 3 (eIF-3) complex. The eIF-3 complex interacts with pix.

It is found in the cytoplasm. RNA-binding component of the eukaryotic translation initiation factor 3 (eIF-3) complex, which is involved in protein synthesis of a specialized repertoire of mRNAs and, together with other initiation factors, stimulates binding of mRNA and methionyl-tRNAi to the 40S ribosome. The eIF-3 complex specifically targets and initiates translation of a subset of mRNAs involved in cell proliferation. The chain is Eukaryotic translation initiation factor 3 subunit A from Drosophila grimshawi (Hawaiian fruit fly).